The following is a 166-amino-acid chain: uncharacterized protein (166 aa).

A helical membrane pass occupies residues 34–54; that stretch reads FWGKVLVLTFGIICVVFVIFM. Disordered stretches follow at residues 73-93 and 123-166; these read QRTQ…SQQF and TSTP…NDEV.

It is found in the vacuole membrane. This is an uncharacterized protein from Schizosaccharomyces pombe (strain 972 / ATCC 24843) (Fission yeast).